Here is a 290-residue protein sequence, read N- to C-terminus: Tubulin polyglutamylase complex subunit 1 (290 aa).

Positions 1 to 30 (MAAVEKRRQAVPPPAGFTDSGRQSVSRAAG) are disordered. Phosphoserine occurs at positions 34 and 266.

Part of the neuronal tubulin polyglutamylase complex which contains TPGS1, TPGS2, TTLL1, LRRC49 and NICN1. Interacts with PCM1, CSTPP1 and LRRC49.

It localises to the cytoplasm. The protein localises to the cytoskeleton. Its subcellular location is the cilium axoneme. It is found in the flagellum axoneme. The protein resides in the cilium basal body. It localises to the flagellum basal body. The protein localises to the cell projection. Its subcellular location is the axon. It is found in the dendrite. The protein resides in the microtubule organizing center. It localises to the centrosome. The protein localises to the centriolar satellite. Subunit of the tubulin polyglutamylase complex (TPGC). The complex mediates cilia and flagella polyglutamylation which is essential for their biogenesis and motility. May act in the targeting of the tubulin polyglutamylase complex. Required for the development of the spermatid flagellum. This is Tubulin polyglutamylase complex subunit 1 from Homo sapiens (Human).